The primary structure comprises 136 residues: Class I hydrophobin A (136 aa).

An N-terminal signal peptide occupies residues 1–16; that stretch reads MRFALAITTLIAAVTA. 4 disulfide bridges follow: Cys-39/Cys-109, Cys-47/Cys-103, Cys-48/Cys-85, and Cys-110/Cys-128.

Belongs to the fungal hydrophobin family. Expressed in aerial conidia, in vitro blastospores, submerged conidia, and cells sporulating on chitin and insect cuticle, with hyd1 expression peaking in growing mycelia.

The protein localises to the secreted. The protein resides in the cell wall. Its subcellular location is the spore coat. It is found in the vacuole. It localises to the cytoplasmic vesicle. Its function is as follows. Aerial growth, conidiation, and dispersal of filamentous fungi in the environment rely upon a capability of their secreting small amphipathic proteins called hydrophobins (HPBs) with low sequence identity. Class I can self-assemble into an outermost layer of rodlet bundles on aerial cell surfaces, conferring cellular hydrophobicity that supports fungal growth, development and dispersal; whereas Class II form highly ordered films at water-air interfaces through intermolecular interactions but contribute nothing to the rodlet structure. Hyd1A contributes to certain cell wall-related features, such as hydrophobicity but is not involved in cell wall-related events during fungal proliferation in host hemocoel. Hyd1A and hyd1B coregulate the formation, morphology and orderly assembly of rodlet bundles required for conidial hydrophobicity and infectivity. Contributes to the spore coat rodlet layer. In Beauveria bassiana (strain ARSEF 2860) (White muscardine disease fungus), this protein is Class I hydrophobin A.